The sequence spans 209 residues: Uracil phosphoribosyltransferase (209 aa).

5-phospho-alpha-D-ribose 1-diphosphate is bound by residues Arg-79, Arg-104, and 131 to 139 (DPMLATGNS). Uracil contacts are provided by residues Ile-194 and 199 to 201 (GDA). Position 200 (Asp-200) interacts with 5-phospho-alpha-D-ribose 1-diphosphate.

It belongs to the UPRTase family. It depends on Mg(2+) as a cofactor.

The catalysed reaction is UMP + diphosphate = 5-phospho-alpha-D-ribose 1-diphosphate + uracil. The protein operates within pyrimidine metabolism; UMP biosynthesis via salvage pathway; UMP from uracil: step 1/1. Its activity is regulated as follows. Allosterically activated by GTP. Catalyzes the conversion of uracil and 5-phospho-alpha-D-ribose 1-diphosphate (PRPP) to UMP and diphosphate. This chain is Uracil phosphoribosyltransferase, found in Rhizobium rhizogenes (strain K84 / ATCC BAA-868) (Agrobacterium radiobacter).